Consider the following 475-residue polypeptide: MSTDQQSSVEDQTVAMVNVRRANFKSFWDKYSDKPDTNSMMLNHSAEELESSDRADILASLPLLHNKDVVDIGAGIGRFTTVLAETARWVLSTDFIDSFIKKNQERNAHLGNINYQVGDAVGLKMESNSVDLVFTNWLMMYLSDEETVEFIFNCMRWLRSHGIVHLRESCSEPSTGRSKAKSMHDTANANPTHYRFSSLYINLLRAIRYRDVDNKLWRFNVQWSCSVPTYIKRSNNWRQVHWLAEKVPAEDGAKGTSFNELVELIKNTWQNEQEAWDAKLDDEKYVWTDKVFSSALTSLPSNSTFFLYTPRTVSPYCHINAHTLAETFNANVWNTEIIPEYYRTSLTKSNNLKDQRVRFGWNQSLTDSVTYWQQKDALFDVFVATEFLSTVDDETIRQLPNVMSDGAKFITLEPVDEVNEAEMKQRIQELGYTLKSFTDVTDQCIEAQEQYFKDHEQLRDEKVIRKNWVLLELTH.

This sequence belongs to the class I-like SAM-binding methyltransferase superfamily.

It carries out the reaction phosphoethanolamine + S-adenosyl-L-methionine = N-methylethanolamine phosphate + S-adenosyl-L-homocysteine + H(+). It participates in phospholipid metabolism; phosphatidylcholine biosynthesis; phosphocholine from phosphoethanolamine. Its activity is regulated as follows. Feedback inhibition by phosphatidylcholine. Functionally, catalyzes the first step in the synthesis of phosphocholine by converting phosphoethanolamine into phospho-monomethylethanolamine (N-methylethanolamine phosphate). Phosphocholine is a precursor for phosphatidylcholine, a major component in membranes and a precursor itself in the production of glycoconjugates secreted by parasitic nematodes to avoid host immune responses. In Caenorhabditis elegans, this protein is Phosphoethanolamine N-methyltransferase 1.